A 171-amino-acid chain; its full sequence is S-ribosylhomocysteine lyase (171 aa).

Positions 54, 58, and 128 each coordinate Fe cation.

The protein belongs to the LuxS family. Homodimer. It depends on Fe cation as a cofactor.

The catalysed reaction is S-(5-deoxy-D-ribos-5-yl)-L-homocysteine = (S)-4,5-dihydroxypentane-2,3-dione + L-homocysteine. Functionally, involved in the synthesis of autoinducer 2 (AI-2) which is secreted by bacteria and is used to communicate both the cell density and the metabolic potential of the environment. The regulation of gene expression in response to changes in cell density is called quorum sensing. Catalyzes the transformation of S-ribosylhomocysteine (RHC) to homocysteine (HC) and 4,5-dihydroxy-2,3-pentadione (DPD). The chain is S-ribosylhomocysteine lyase from Klebsiella pneumoniae (strain 342).